Here is a 1700-residue protein sequence, read N- to C-terminus: RNA replication protein (1700 aa).

One can recognise an Alphavirus-like MT domain in the interval 299–462 (DPYAVRSHTH…VHEVKNSNWL (164 aa)). One can recognise a (+)RNA virus helicase ATP-binding domain in the interval 842-991 (VLITSDEAGE…LFAPLSPFYL (150 aa)). 868–875 (GAGGAGKT) provides a ligand contact to ATP. One can recognise a (+)RNA virus helicase C-terminal domain in the interval 992–1128 (NWTWRMTRPV…LVREYELNQP (137 aa)). Residues 1369–1480 (GHATINDCEA…SVKPAFKELE (112 aa)) enclose the RdRp catalytic domain.

This sequence belongs to the potexvirus/carlavirus RNA replication protein family.

The catalysed reaction is RNA(n) + a ribonucleoside 5'-triphosphate = RNA(n+1) + diphosphate. The enzyme catalyses ATP + H2O = ADP + phosphate + H(+). RNA replication. The protein possibly functions as an ATP-binding helicase. This is RNA replication protein from Sclerotinia sclerotiorum (White mold).